The sequence spans 129 residues: MSNIPAELKYASSHEWIRKEEDGSYTVGISEHAQELLGDMVFIELPDVGDTLSAGEDCAVAESVKAASDIYAPLSGEVLAINEALEDSPELVNSDAFGDGWFFRVMPSDVAEIDSLLDAEGYQAVIDEE.

Residues 24-106 (SYTVGISEHA…FGDGWFFRVM (83 aa)) enclose the Lipoyl-binding domain. At Lys-65 the chain carries N6-lipoyllysine.

It belongs to the GcvH family. As to quaternary structure, the glycine cleavage system is composed of four proteins: P, T, L and H. It depends on (R)-lipoate as a cofactor.

The glycine cleavage system catalyzes the degradation of glycine. The H protein shuttles the methylamine group of glycine from the P protein to the T protein. The sequence is that of Glycine cleavage system H protein from Shewanella sediminis (strain HAW-EB3).